We begin with the raw amino-acid sequence, 494 residues long: uncharacterized protein (494 aa).

Positions phenylalanine 4–phenylalanine 82 constitute a 2Fe-2S ferredoxin-type domain. Positions 46, 51, 54, and 66 each coordinate [2Fe-2S] cluster. 4Fe-4S ferredoxin-type domains are found at residues aspartate 127–glycine 157 and glutamate 178–asparagine 208. [4Fe-4S] cluster is bound by residues cysteine 137, cysteine 140, cysteine 143, cysteine 147, cysteine 189, cysteine 192, cysteine 195, and cysteine 199.

It belongs to the succinate dehydrogenase/fumarate reductase iron-sulfur protein family.

This is an uncharacterized protein from Methanococcus maripaludis (strain DSM 14266 / JCM 13030 / NBRC 101832 / S2 / LL).